A 155-amino-acid chain; its full sequence is 6,7-dimethyl-8-ribityllumazine synthase (155 aa).

Residues Phe24, Ala58 to Glu60, and Val82 to Ile84 contribute to the 5-amino-6-(D-ribitylamino)uracil site. Ser87–Thr88 lines the (2S)-2-hydroxy-3-oxobutyl phosphate pocket. His90 functions as the Proton donor in the catalytic mechanism. Phe115 is a binding site for 5-amino-6-(D-ribitylamino)uracil. (2S)-2-hydroxy-3-oxobutyl phosphate is bound at residue Arg129.

The protein belongs to the DMRL synthase family.

It carries out the reaction (2S)-2-hydroxy-3-oxobutyl phosphate + 5-amino-6-(D-ribitylamino)uracil = 6,7-dimethyl-8-(1-D-ribityl)lumazine + phosphate + 2 H2O + H(+). The protein operates within cofactor biosynthesis; riboflavin biosynthesis; riboflavin from 2-hydroxy-3-oxobutyl phosphate and 5-amino-6-(D-ribitylamino)uracil: step 1/2. Catalyzes the formation of 6,7-dimethyl-8-ribityllumazine by condensation of 5-amino-6-(D-ribitylamino)uracil with 3,4-dihydroxy-2-butanone 4-phosphate. This is the penultimate step in the biosynthesis of riboflavin. The protein is 6,7-dimethyl-8-ribityllumazine synthase of Chlorobium chlorochromatii (strain CaD3).